Here is a 329-residue protein sequence, read N- to C-terminus: CDP-6-deoxy-L-threo-D-glycero-4-hexulose-3-dehydrase reductase (329 aa).

In terms of domain architecture, 2Fe-2S ferredoxin-type spans 2-93 (SLNVKLHPSG…ELDVNYYPEL (92 aa)). [2Fe-2S] cluster-binding residues include cysteine 37, cysteine 42, cysteine 45, and cysteine 75. In terms of domain architecture, FAD-binding FR-type spans 98–197 (KKTYPCKLDS…EGPQGTFFVR (100 aa)).

As to quaternary structure, monomer.

Its pathway is nucleotide-sugar biosynthesis; CDP-ascarylose biosynthesis. It functions in the pathway bacterial outer membrane biogenesis; lipopolysaccharide biosynthesis. Participates in the conversion of CDP-6-deoxy-D-glycero-L-threo-4-hexulose to 3,6-dideoxy-D-glycero-D-glycero-4-hexulose together with CDP-6-deoxy-D-glycero-L-threo-4-hexulose-3-dehydrase (E1) in two consecutive steps. The detailed mechanism of E3 is not yet resolved. This chain is CDP-6-deoxy-L-threo-D-glycero-4-hexulose-3-dehydrase reductase (ascD), found in Yersinia pestis.